The chain runs to 578 residues: Arginine--tRNA ligase (578 aa).

The 'HIGH' region signature appears at 127-137 (PNLAKEMHVGH).

The protein belongs to the class-I aminoacyl-tRNA synthetase family. As to quaternary structure, monomer.

The protein localises to the cytoplasm. The catalysed reaction is tRNA(Arg) + L-arginine + ATP = L-arginyl-tRNA(Arg) + AMP + diphosphate. In Pseudomonas savastanoi pv. phaseolicola (strain 1448A / Race 6) (Pseudomonas syringae pv. phaseolicola (strain 1448A / Race 6)), this protein is Arginine--tRNA ligase.